Reading from the N-terminus, the 578-residue chain is Longifolene synthase (578 aa).

3 residues coordinate Mg(2+): D331, D335, and D475. The DDXXD motif motif lies at 331–335 (DDLYD).

This sequence belongs to the terpene synthase family. Tpsd subfamily. Requires Mg(2+) as cofactor. The cofactor is Mn(2+).

The protein resides in the cytoplasm. The enzyme catalyses (2E,6E)-farnesyl diphosphate = longifolene + diphosphate. The protein operates within sesquiterpene biosynthesis. It functions in the pathway terpene metabolism; oleoresin biosynthesis. Its function is as follows. Involved in defensive oleoresin formation in conifers in response to insect attack or other injury. Involved in sesquiterpene (C15) olefins biosynthesis. Produces mainly longifolene, but also multiple minor products including alpha-longipinene, alpha-longicyclene, E-beta-farnesene, longiborneol, cyclosativene, beta-longipinene, and 12 other sesquiterpenes when used with farnesyl diphosphate (FPP) as substrate. The polypeptide is Longifolene synthase (TPS-Lon) (Picea abies (Norway spruce)).